We begin with the raw amino-acid sequence, 666 residues long: ATP synthase subunit alpha 2 (666 aa).

182–189 is a binding site for ATP; that stretch reads GDRATGKT. The interval 527–666 is disordered; that stretch reads MPAEDAAGDI…DAEAEARHKR (140 aa). Over residues 545–590 the composition is skewed to basic and acidic residues; it reads ARGDADRDADHGANREVSREVSPEASREVSREVSCEVSHEADRDAA. Residues 591–601 show a composition bias toward low complexity; the sequence is ADAARVAGRAP. Basic and acidic residues predominate over residues 623-641; sequence ADGDRASASRPRPDARGDA.

It belongs to the ATPase alpha/beta chains family. As to quaternary structure, F-type ATPases have 2 components, CF(1) - the catalytic core - and CF(0) - the membrane proton channel. CF(1) has five subunits: alpha(3), beta(3), gamma(1), delta(1), epsilon(1). CF(0) has three main subunits: a(1), b(2) and c(9-12). The alpha and beta chains form an alternating ring which encloses part of the gamma chain. CF(1) is attached to CF(0) by a central stalk formed by the gamma and epsilon chains, while a peripheral stalk is formed by the delta and b chains.

The protein localises to the cell inner membrane. It catalyses the reaction ATP + H2O + 4 H(+)(in) = ADP + phosphate + 5 H(+)(out). Its function is as follows. Produces ATP from ADP in the presence of a proton gradient across the membrane. The alpha chain is a regulatory subunit. This is ATP synthase subunit alpha 2 from Burkholderia pseudomallei (strain 1106a).